Consider the following 296-residue polypeptide: 4-hydroxybenzoate octaprenyltransferase (296 aa).

The next 8 helical transmembrane spans lie at 22-42, 46-66, 99-121, 139-159, 163-183, 211-231, 238-258, and 270-290; these read PIGILLLLWPTLWALWLSALG, WIVVWIFILGTVLMRSAGCVI, LFAGLSLLSFLLVVFLGNTLVIW, FFAIPQAYLGVAFGFGIPMAY, LGEVPAEAWWLLLANVFWAVA, FDVAAVMLCYGVTLAIIGGIG, PAFYAGLAVATCIMGVHYTWI, and FLHNNWVGLSIFVGIVVDFLV.

It belongs to the UbiA prenyltransferase family. It depends on Mg(2+) as a cofactor.

The protein localises to the cell inner membrane. The enzyme catalyses all-trans-octaprenyl diphosphate + 4-hydroxybenzoate = 4-hydroxy-3-(all-trans-octaprenyl)benzoate + diphosphate. It participates in cofactor biosynthesis; ubiquinone biosynthesis. Catalyzes the prenylation of para-hydroxybenzoate (PHB) with an all-trans polyprenyl group. Mediates the second step in the final reaction sequence of ubiquinone-8 (UQ-8) biosynthesis, which is the condensation of the polyisoprenoid side chain with PHB, generating the first membrane-bound Q intermediate 3-octaprenyl-4-hydroxybenzoate. In Dechloromonas aromatica (strain RCB), this protein is 4-hydroxybenzoate octaprenyltransferase.